We begin with the raw amino-acid sequence, 388 residues long: Succinate--CoA ligase [ADP-forming] subunit beta (388 aa).

Residues 9-244 (KQLFARYGLP…HSQEDEREAH (236 aa)) form the ATP-grasp domain. Residues Lys-46, 53-55 (GRG), Glu-99, Thr-102, and Glu-107 contribute to the ATP site. Residues Asn-199 and Asp-213 each coordinate Mg(2+). Substrate-binding positions include Asn-264 and 321 to 323 (GIV).

This sequence belongs to the succinate/malate CoA ligase beta subunit family. As to quaternary structure, heterotetramer of two alpha and two beta subunits. It depends on Mg(2+) as a cofactor.

The catalysed reaction is succinate + ATP + CoA = succinyl-CoA + ADP + phosphate. The enzyme catalyses GTP + succinate + CoA = succinyl-CoA + GDP + phosphate. Its pathway is carbohydrate metabolism; tricarboxylic acid cycle; succinate from succinyl-CoA (ligase route): step 1/1. Functionally, succinyl-CoA synthetase functions in the citric acid cycle (TCA), coupling the hydrolysis of succinyl-CoA to the synthesis of either ATP or GTP and thus represents the only step of substrate-level phosphorylation in the TCA. The beta subunit provides nucleotide specificity of the enzyme and binds the substrate succinate, while the binding sites for coenzyme A and phosphate are found in the alpha subunit. This chain is Succinate--CoA ligase [ADP-forming] subunit beta, found in Sodalis glossinidius (strain morsitans).